The following is a 461-amino-acid chain: Kynureninase (461 aa).

Pyridoxal 5'-phosphate contacts are provided by residues Leu114, Thr115, 142-145, Asp228, His231, and Tyr253; that span reads FPSD. An N6-(pyridoxal phosphate)lysine modification is found at Lys254. Trp288 and Asn316 together coordinate pyridoxal 5'-phosphate.

It belongs to the kynureninase family. In terms of assembly, homodimer. Requires pyridoxal 5'-phosphate as cofactor.

Its subcellular location is the cytoplasm. The enzyme catalyses L-kynurenine + H2O = anthranilate + L-alanine + H(+). The catalysed reaction is 3-hydroxy-L-kynurenine + H2O = 3-hydroxyanthranilate + L-alanine + H(+). It participates in amino-acid degradation; L-kynurenine degradation; L-alanine and anthranilate from L-kynurenine: step 1/1. The protein operates within cofactor biosynthesis; NAD(+) biosynthesis; quinolinate from L-kynurenine: step 2/3. Its function is as follows. Catalyzes the cleavage of L-kynurenine (L-Kyn) and L-3-hydroxykynurenine (L-3OHKyn) into anthranilic acid (AA) and 3-hydroxyanthranilic acid (3-OHAA), respectively. This Lodderomyces elongisporus (strain ATCC 11503 / CBS 2605 / JCM 1781 / NBRC 1676 / NRRL YB-4239) (Yeast) protein is Kynureninase.